We begin with the raw amino-acid sequence, 460 residues long: 3-isopropylmalate dehydratase large subunit (460 aa).

[4Fe-4S] cluster-binding residues include C338, C398, and C401.

The protein belongs to the aconitase/IPM isomerase family. LeuC type 1 subfamily. As to quaternary structure, heterodimer of LeuC and LeuD. It depends on [4Fe-4S] cluster as a cofactor.

It carries out the reaction (2R,3S)-3-isopropylmalate = (2S)-2-isopropylmalate. It functions in the pathway amino-acid biosynthesis; L-leucine biosynthesis; L-leucine from 3-methyl-2-oxobutanoate: step 2/4. Catalyzes the isomerization between 2-isopropylmalate and 3-isopropylmalate, via the formation of 2-isopropylmaleate. This chain is 3-isopropylmalate dehydratase large subunit, found in Streptococcus thermophilus (strain ATCC BAA-491 / LMD-9).